We begin with the raw amino-acid sequence, 322 residues long: Cytochrome f (322 aa).

The N-terminal stretch at 1–35 (MQTRNTFSWTWIREEITRSISVSLMIYIITWSSIS) is a signal peptide. Heme contacts are provided by Tyr38, Cys58, Cys61, and His62. A helical transmembrane segment spans residues 288–308 (VQGLLFFLGSVVLAQIFLVLK).

This sequence belongs to the cytochrome f family. The 4 large subunits of the cytochrome b6-f complex are cytochrome b6, subunit IV (17 kDa polypeptide, petD), cytochrome f and the Rieske protein, while the 4 small subunits are PetG, PetL, PetM and PetN. The complex functions as a dimer. The cofactor is heme.

It localises to the plastid. Its subcellular location is the chloroplast thylakoid membrane. Component of the cytochrome b6-f complex, which mediates electron transfer between photosystem II (PSII) and photosystem I (PSI), cyclic electron flow around PSI, and state transitions. In Aethionema cordifolium (Lebanon stonecress), this protein is Cytochrome f.